A 270-amino-acid chain; its full sequence is NAD(P)H-hydrate epimerase (270 aa).

Residues 25–234 (FQQLMDLMQN…DLLAPEAIYQ (210 aa)) enclose the YjeF N-terminal domain. 73 to 77 (DNGGQ) provides a ligand contact to (6S)-NADPHX. K(+) contacts are provided by Asn74 and Asp144. (6S)-NADPHX-binding positions include 148-154 (GVGLYGH) and Glu177. Thr180 is a binding site for K(+).

Belongs to the NnrE/AIBP family. The cofactor is K(+).

It catalyses the reaction (6R)-NADHX = (6S)-NADHX. It carries out the reaction (6R)-NADPHX = (6S)-NADPHX. Catalyzes the epimerization of the S- and R-forms of NAD(P)HX, a damaged form of NAD(P)H that is a result of enzymatic or heat-dependent hydration. This is a prerequisite for the S-specific NAD(P)H-hydrate dehydratase to allow the repair of both epimers of NAD(P)HX. The chain is NAD(P)H-hydrate epimerase from Legionella pneumophila subsp. pneumophila (strain Philadelphia 1 / ATCC 33152 / DSM 7513).